A 1207-amino-acid polypeptide reads, in one-letter code: Ras GTPase-activating protein gap-2 (1207 aa).

2 disordered regions span residues 1–29 (MKVI…SCTK) and 221–316 (RMSS…GSLR). A PH domain is found at 40–383 (PPICHGWLIV…WMENLRKTMN (344 aa)). The span at 223-236 (SSSSHNLSTRLSGS) shows a compositional bias: low complexity. Composition is skewed to polar residues over residues 237–247 (TQNLNQPTNAY) and 286–297 (ASNTPSRDSSLY). Positions 374–490 (WMENLRKTMN…SSRSPVERWY (117 aa)) constitute a C2 domain. Polar residues predominate over residues 495-504 (SHSDSGTSRI). Residues 495-516 (SHSDSGTSRIASALGGKSSSQE) form a disordered region. A Ras-GAP domain is found at 579 to 789 (NLAKEFLCDL…HRMKDFLLRI (211 aa)). 4 disordered regions span residues 856 to 903 (GVFH…LGRS), 923 to 1013 (FQTP…SSSS), 1086 to 1107 (ATGG…RASR), and 1163 to 1207 (LKSK…VVPN). Composition is skewed to polar residues over residues 862–876 (MVQQ…SPQQ) and 891–903 (TPPT…LGRS). Over residues 939–953 (TGTSSSRTSDKTTSS) the composition is skewed to low complexity. Positions 955–972 (EIRDDTDSDFELREDRGR) are enriched in basic and acidic residues. Over residues 985–1013 (ASPSSSQQASSGYLSNNPSRSSYSNSSSS) the composition is skewed to low complexity. Residues 1181 to 1207 (SGASEDSYDSLSSLDRPSRQSLVVVPN) show a composition bias toward low complexity.

Mainly expressed in gonads and vulval cells. Isoform c in expressed in pharyngeal epithelial cells and several rectal/blast cells in the tail region. Isoform f is weakly expressed in four cells symmetrically located in the vulval region. Isoform g is strongly expressed in the pharyngeal muscle cells m6 in addition to several cells in the tail region.

Its subcellular location is the cytoplasm. Functionally, GTPase-activating protein, which acts as a negative regulator for the member of the Ras family let-60. Probably decreases the signaling activity of Ras by stimulating its intrinsic GTPase activity, thereby lowering the levels of GTP-bound, active Ras. The different isoforms may play a distinct role in specific tissues. The sequence is that of Ras GTPase-activating protein gap-2 (gap-2) from Caenorhabditis elegans.